A 284-amino-acid chain; its full sequence is ATP synthase subunit a (284 aa).

The next 5 membrane-spanning stretches (helical) occupy residues 47-67, 108-128, 156-176, 233-253, and 254-274; these read AFHL…LIFF, VAPL…MDLV, VPTA…ILII, MIFI…SLPW, and AIFH…LVIV.

It belongs to the ATPase A chain family. F-type ATPases have 2 components, CF(1) - the catalytic core - and CF(0) - the membrane proton channel. CF(1) has five subunits: alpha(3), beta(3), gamma(1), delta(1), epsilon(1). CF(0) has three main subunits: a(1), b(2) and c(9-12). The alpha and beta chains form an alternating ring which encloses part of the gamma chain. CF(1) is attached to CF(0) by a central stalk formed by the gamma and epsilon chains, while a peripheral stalk is formed by the delta and b chains.

Its subcellular location is the cell inner membrane. Key component of the proton channel; it plays a direct role in the translocation of protons across the membrane. This chain is ATP synthase subunit a, found in Ruthia magnifica subsp. Calyptogena magnifica.